The primary structure comprises 1146 residues: Inositol hexakisphosphate and diphosphoinositol-pentakisphosphate kinase (1146 aa).

The interval 1-33 is disordered; sequence MSGIKKEPIESDEVPQQETKNNLPSAPSEMSPL. Polar residues predominate over residues 16-25; sequence QQETKNNLPS. Phosphoserine occurs at positions 31, 54, and 77. The disordered stretch occupies residues 93–185; that stretch reads TALGNGNNTN…STSHPKPRLP (93 aa). The segment covering 96–106 has biased composition (low complexity); it reads GNGNNTNTVTT. Residues 110 to 120 are compositionally biased toward basic and acidic residues; the sequence is KKADSESKSEA. A compositionally biased stretch (polar residues) spans 125–144; the sequence is LSNSNIVNDADNINSISKTG. Over residues 164–178 the composition is skewed to low complexity; that stretch reads SVPTSSASSRKSSTS. Residue 197–198 coordinates substrate; sequence AK. ATP is bound by residues Arg-278, Lys-351, His-358, Arg-377, 402 to 405, and 412 to 414; these read EQFM and DVK. 377–378 contacts substrate; that stretch reads RK. Positions 414 and 428 each coordinate substrate. Residues Ser-430, Asp-475, and 487 to 489 contribute to the ATP site; that span reads DVN. 492 to 495 contributes to the substrate binding site; it reads SFVK. The polyphosphoinositide-binding domain stretch occupies residues 530–597; sequence REEKEQKWVF…VLQALRIALD (68 aa). Phosphoserine is present on residues Ser-895 and Ser-1107. The tract at residues 1106 to 1146 is disordered; that stretch reads TSPNLSFQKRKTRRKSVSVEKLKRPASSGSSSSTSVNKTLD.

This sequence belongs to the histidine acid phosphatase family. VIP1 subfamily.

Its subcellular location is the cytoplasm. The protein localises to the cytoskeleton. It catalyses the reaction 1D-myo-inositol hexakisphosphate + ATP = 1-diphospho-1D-myo-inositol 2,3,4,5,6-pentakisphosphate + ADP. It carries out the reaction 5-diphospho-1D-myo-inositol 1,2,3,4,6-pentakisphosphate + ATP + H(+) = 1,5-bis(diphospho)-1D-myo-inositol 2,3,4,6-tetrakisphosphate + ADP. Its function is as follows. Bifunctional inositol kinase that acts in concert with the IP6K kinases to synthesize the diphosphate group-containing inositol pyrophosphates diphosphoinositol pentakisphosphate, PP-InsP5, and bis-diphosphoinositol tetrakisphosphate, (PP)2-InsP4. Phosphorylates inositol hexakisphosphate (InsP6) at position 1 to produce PP-InsP5 which is in turn phosphorylated by IP6Ks to produce (PP)2-InsP4. Alternatively, phosphorylates PP-InsP5 at position 1, produced by IP6Ks from InsP6, to produce (PP)2-InsP4. Required for maintaining cellular integrity, normal growth and interactions with the ARP complex. Acts as a regulator of the PHO80-PHO85 cyclin/cyclin-dependent kinase (CDK) complex, thereby regulating signaling of phosphate availability. Required for the function of the cortical actin cytoskeleton, possibly by participating in correct F-actin localization and ensuring polarized growth. Regulates polarized growth and modulates interphase microtubule cytoskeleton. Regulates microtubule dynamics without the requirement of microtubule plus-end tracking protein Mal3. Required for growth zone selection. This Saccharomyces cerevisiae (strain ATCC 204508 / S288c) (Baker's yeast) protein is Inositol hexakisphosphate and diphosphoinositol-pentakisphosphate kinase.